An 879-amino-acid chain; its full sequence is Metabotropic glutamate receptor 3 (879 aa).

Residues M1 to S22 form the signal peptide. The Extracellular portion of the chain corresponds to L23–W576. The cysteines at positions 57 and 99 are disulfide-linked. Residues S151 and A172 to T174 contribute to the L-glutamate site. A glycan (N-linked (GlcNAc...) asparagine) is linked at N209. Residue Y222 coordinates L-glutamate. 7 disulfides stabilise this stretch: C240–C527, C361–C373, C412–C419, C509–C528, C513–C531, C534–C546, and C549–C562. An N-linked (GlcNAc...) asparagine glycan is attached at N292. D301 is an L-glutamate binding site. K389 is an L-glutamate binding site. N-linked (GlcNAc...) asparagine glycans are attached at residues N414 and N439. The chain crosses the membrane as a helical span at residues V577–I599. Topologically, residues K600–E613 are cytoplasmic. Residues L614 to A634 traverse the membrane as a helical segment. Residues K635–R645 lie on the Extracellular side of the membrane. Residues L646–N664 form a helical membrane-spanning segment. Over C665–Q688 the chain is Cytoplasmic. The chain crosses the membrane as a helical span at residues V689–L709. The Extracellular portion of the chain corresponds to E710–D734. Residues S735 to F756 traverse the membrane as a helical segment. Topologically, residues K757–K769 are cytoplasmic. Residues F770 to T792 form a helical membrane-spanning segment. Residues S793 to T802 are Extracellular-facing. The chain crosses the membrane as a helical span at residues M803–F828. The Cytoplasmic segment spans residues Q829–L879.

Belongs to the G-protein coupled receptor 3 family. In terms of assembly, interacts with TAMALIN.

The protein localises to the cell membrane. Functionally, G-protein coupled receptor for glutamate. Ligand binding causes a conformation change that triggers signaling via guanine nucleotide-binding proteins (G proteins) and modulates the activity of down-stream effectors. Signaling inhibits adenylate cyclase activity. In Pongo abelii (Sumatran orangutan), this protein is Metabotropic glutamate receptor 3 (GRM3).